A 361-amino-acid chain; its full sequence is Alanine racemase (361 aa).

Residue Lys-34 is the Proton acceptor; specific for D-alanine of the active site. Lys-34 is subject to N6-(pyridoxal phosphate)lysine. Position 129 (Arg-129) interacts with substrate. Tyr-256 serves as the catalytic Proton acceptor; specific for L-alanine. Residue Met-304 participates in substrate binding.

The protein belongs to the alanine racemase family. Requires pyridoxal 5'-phosphate as cofactor.

It carries out the reaction L-alanine = D-alanine. It participates in amino-acid biosynthesis; D-alanine biosynthesis; D-alanine from L-alanine: step 1/1. In terms of biological role, catalyzes the interconversion of L-alanine and D-alanine. May also act on other amino acids. This chain is Alanine racemase (alr), found in Corynebacterium glutamicum (strain R).